The following is a 445-amino-acid chain: Phosphoglucosamine mutase (445 aa).

The active-site Phosphoserine intermediate is S102. 4 residues coordinate Mg(2+): S102, D241, D243, and D245. S102 is subject to Phosphoserine.

Belongs to the phosphohexose mutase family. Requires Mg(2+) as cofactor. In terms of processing, activated by phosphorylation.

It catalyses the reaction alpha-D-glucosamine 1-phosphate = D-glucosamine 6-phosphate. In terms of biological role, catalyzes the conversion of glucosamine-6-phosphate to glucosamine-1-phosphate. This is Phosphoglucosamine mutase from Variovorax paradoxus (strain S110).